The primary structure comprises 264 residues: Methionine aminopeptidase (264 aa).

His-79 is a substrate binding site. Residues Asp-97, Asp-108, and His-171 each contribute to the a divalent metal cation site. A substrate-binding site is contributed by His-178. The a divalent metal cation site is built by Glu-204 and Glu-235.

Belongs to the peptidase M24A family. Methionine aminopeptidase type 1 subfamily. In terms of assembly, monomer. Co(2+) serves as cofactor. The cofactor is Zn(2+). Requires Mn(2+) as cofactor. Fe(2+) is required as a cofactor.

The catalysed reaction is Release of N-terminal amino acids, preferentially methionine, from peptides and arylamides.. Its function is as follows. Removes the N-terminal methionine from nascent proteins. The N-terminal methionine is often cleaved when the second residue in the primary sequence is small and uncharged (Met-Ala-, Cys, Gly, Pro, Ser, Thr, or Val). Requires deformylation of the N(alpha)-formylated initiator methionine before it can be hydrolyzed. In Buchnera aphidicola subsp. Acyrthosiphon pisum (strain APS) (Acyrthosiphon pisum symbiotic bacterium), this protein is Methionine aminopeptidase.